The sequence spans 473 residues: Double-stranded RNA-binding protein 7 (473 aa).

The span at 1 to 10 (MDMPPTPLPP) shows a compositional bias: pro residues. Residues 1–22 (MDMPPTPLPPETANTSPAPNGA) are disordered. DRBM domains lie at 33-102 (VFKS…EIVK) and 118-185 (LCKN…AIQG). 3 stretches are compositionally biased toward basic and acidic residues: residues 286 to 307 (KRVEAEPPRDIEMVQPDKENQH), 317 to 327 (DEARVEQEPSR), and 416 to 427 (VDARVVKEESPR). 2 disordered regions span residues 286-329 (KRVE…SRDI) and 393-473 (QLNE…MSEE). A compositionally biased stretch (polar residues) spans 433-450 (EATNMKETPKNSAVCNSP).

Binds double-stranded RNA. In Oryza sativa subsp. japonica (Rice), this protein is Double-stranded RNA-binding protein 7 (DRB7).